Reading from the N-terminus, the 298-residue chain is Ankyrin repeat domain-containing protein 29 (298 aa).

8 ANK repeats span residues 8-38 (PLANAVFWAARKGNLALLQLLLNSGRVDVDC), 42-71 (YGTTALMVASYSGHYECVRELIMQGADINL), 75-104 (TGSTALFFASQQGHNEIVKLLFEFGASTEF), 108-137 (DGGTALCAACQFGHSRVVDTLLKNGANVHD), 141-170 (DGATALFLASQEGHVNLIRQLLSSGAKVNQ), 174-203 (DGTAPLWMAAQMGHSEVVKVLLLRGADRDA), 207-236 (DGSTALFKAAHKGHCSVMEELLKFSPSLGI), and 239-268 (NGSTALHAAVMGGSLKAVDLLLKANADPAL).

This chain is Ankyrin repeat domain-containing protein 29 (ankrd29), found in Danio rerio (Zebrafish).